The primary structure comprises 277 residues: 2,3,4,5-tetrahydropyridine-2,6-dicarboxylate N-succinyltransferase (277 aa).

Residues Arg106 and Asp143 each coordinate substrate.

Belongs to the transferase hexapeptide repeat family. As to quaternary structure, homotrimer.

The protein resides in the cytoplasm. The catalysed reaction is (S)-2,3,4,5-tetrahydrodipicolinate + succinyl-CoA + H2O = (S)-2-succinylamino-6-oxoheptanedioate + CoA. The protein operates within amino-acid biosynthesis; L-lysine biosynthesis via DAP pathway; LL-2,6-diaminopimelate from (S)-tetrahydrodipicolinate (succinylase route): step 1/3. This chain is 2,3,4,5-tetrahydropyridine-2,6-dicarboxylate N-succinyltransferase, found in Variovorax paradoxus (strain S110).